A 276-amino-acid chain; its full sequence is Zinc transporter ZTP29 (276 aa).

Residues Met1–Leu6 lie on the Cytoplasmic side of the membrane. The chain crosses the membrane as a helical span at residues Val7–Val27. Residues Leu28–Lys35 lie on the Lumenal side of the membrane. The chain crosses the membrane as a helical span at residues Met36 to Leu56. Residues Ala57 to Ser63 lie on the Cytoplasmic side of the membrane. A helical transmembrane segment spans residues Ile64–Thr84. Residues Lys85 to Ser123 are Lumenal-facing. A helical transmembrane segment spans residues Gly124–Leu144. Topologically, residues Gly145–Leu156 are cytoplasmic. A helical transmembrane segment spans residues Ala157–Phe177. Residues Ala178–Lys187 lie on the Lumenal side of the membrane. A helical membrane pass occupies residues Leu188–Pro208. The Cytoplasmic segment spans residues Arg209–Leu219. Residues Leu220 to Phe240 form a helical membrane-spanning segment. The Lumenal segment spans residues Asp241–Lys250. Residues Ala251 to Pro271 traverse the membrane as a helical segment. At Glu272–Leu276 the chain is on the cytoplasmic side.

This sequence belongs to the ZIP transporter (TC 2.A.5) family. ZupT subfamily. In terms of tissue distribution, expressed in hypocotyls, cotyledons, leaves and anthers.

Its subcellular location is the endoplasmic reticulum membrane. Zinc transporter involved response to salt stress. May act through the regulation of zinc levels required to induce the unfolded protein response (UPR) pathway. This is Zinc transporter ZTP29 (ZTP29) from Arabidopsis thaliana (Mouse-ear cress).